Here is a 246-residue protein sequence, read N- to C-terminus: Ribonuclease PH (246 aa).

Residues arginine 91 and 129-131 (GTR) contribute to the phosphate site.

The protein belongs to the RNase PH family. Homohexameric ring arranged as a trimer of dimers.

The enzyme catalyses tRNA(n+1) + phosphate = tRNA(n) + a ribonucleoside 5'-diphosphate. In terms of biological role, phosphorolytic 3'-5' exoribonuclease that plays an important role in tRNA 3'-end maturation. Removes nucleotide residues following the 3'-CCA terminus of tRNAs; can also add nucleotides to the ends of RNA molecules by using nucleoside diphosphates as substrates, but this may not be physiologically important. Probably plays a role in initiation of 16S rRNA degradation (leading to ribosome degradation) during starvation. In Burkholderia ambifaria (strain ATCC BAA-244 / DSM 16087 / CCUG 44356 / LMG 19182 / AMMD) (Burkholderia cepacia (strain AMMD)), this protein is Ribonuclease PH.